The following is a 956-amino-acid chain: Glutamate receptor ionotropic, kainate 4 (956 aa).

An N-terminal signal peptide occupies residues 1–20 (MPRVSAPLVLLPAWLLMVAC). Over 21–545 (SPHSLRIAAI…YFSFLDPFSP (525 aa)) the chain is Extracellular. N-linked (GlcNAc...) asparagine glycosylation is found at Asn158, Asn220, Asn272, Asn286, Asn323, Asn408, Asn415, and Asn479. L-glutamate is bound by residues Gly500, Thr502, and Arg507. The helical transmembrane segment at 546–566 (GVWLFMLLAYLAVSCVLFLVA) threads the bilayer. Residues 567–623 (RLTPYEWYSPHPCAQGRCNLLVNQYSLGNSLWFPVGGFMQQGSTIAPRALSTRCVSG) lie on the Cytoplasmic side of the membrane. The helical transmembrane segment at 624–644 (VWWAFTLIIISSYTANLAAFL) threads the bilayer. The Extracellular portion of the chain corresponds to 645–804 (TVQRMEVPIE…HRAKGLGMEN (160 aa)). L-glutamate is bound by residues Ser674, Ser675, and Glu723. A glycan (N-linked (GlcNAc...) asparagine) is linked at Asn736. Residues 805–825 (IGGIFVVLICGLIVAIFMAML) form a helical membrane-spanning segment. Residues 826–956 (EFLWTLRHSE…DKTTNSSEPE (131 aa)) are Cytoplasmic-facing. The interval 931–956 (LRARPSPARSEESLEWDKTTNSSEPE) is disordered. Residues 939–948 (RSEESLEWDK) are compositionally biased toward basic and acidic residues.

The protein belongs to the glutamate-gated ion channel (TC 1.A.10.1) family. GRIK4 subfamily. As to quaternary structure, homodimer. Can form functional heteromeric receptors with GRIK1, GRIK2 and GRIK3 subunits. Forms a heteromeric complex with GRIK2. In terms of tissue distribution, expressed in the hippocampus and cerebellum (at protein level).

The protein localises to the cell membrane. It is found in the postsynaptic cell membrane. The protein resides in the presynaptic cell membrane. In terms of biological role, ionotropic glutamate receptor that functions as a cation-permeable ligand-gated ion channel. Cannot form functional channels on its own and produces channel activity only in heteromeric assembly with GRIK1, GRIK2 and GRIK3 subunits. The protein is Glutamate receptor ionotropic, kainate 4 (Grik4) of Mus musculus (Mouse).